Reading from the N-terminus, the 227-residue chain is Uridylate kinase (227 aa).

Residue G9 to S10 participates in ATP binding. G44 serves as a coordination point for UMP. G45 and R49 together coordinate ATP. UMP-binding positions include D66 and T114–T120. The ATP site is built by T140, F146, and D149.

Belongs to the UMP kinase family. In terms of assembly, homohexamer.

The protein localises to the cytoplasm. It catalyses the reaction UMP + ATP = UDP + ADP. It functions in the pathway pyrimidine metabolism; CTP biosynthesis via de novo pathway; UDP from UMP (UMPK route): step 1/1. With respect to regulation, inhibited by UTP. In terms of biological role, catalyzes the reversible phosphorylation of UMP to UDP. The protein is Uridylate kinase of Natronomonas pharaonis (strain ATCC 35678 / DSM 2160 / CIP 103997 / JCM 8858 / NBRC 14720 / NCIMB 2260 / Gabara) (Halobacterium pharaonis).